Consider the following 308-residue polypeptide: Ribosomal RNA small subunit methyltransferase H (308 aa).

S-adenosyl-L-methionine-binding positions include 32-34 (GGH), Asp-52, Phe-78, Asp-100, and Gln-107.

It belongs to the methyltransferase superfamily. RsmH family.

It localises to the cytoplasm. It catalyses the reaction cytidine(1402) in 16S rRNA + S-adenosyl-L-methionine = N(4)-methylcytidine(1402) in 16S rRNA + S-adenosyl-L-homocysteine + H(+). Its function is as follows. Specifically methylates the N4 position of cytidine in position 1402 (C1402) of 16S rRNA. The chain is Ribosomal RNA small subunit methyltransferase H from Legionella pneumophila (strain Corby).